Reading from the N-terminus, the 303-residue chain is Elongation factor Ts (303 aa).

The segment at Thr80 to Val83 is involved in Mg(2+) ion dislocation from EF-Tu.

Belongs to the EF-Ts family.

The protein resides in the cytoplasm. Its function is as follows. Associates with the EF-Tu.GDP complex and induces the exchange of GDP to GTP. It remains bound to the aminoacyl-tRNA.EF-Tu.GTP complex up to the GTP hydrolysis stage on the ribosome. The sequence is that of Elongation factor Ts from Clostridium perfringens (strain ATCC 13124 / DSM 756 / JCM 1290 / NCIMB 6125 / NCTC 8237 / Type A).